The following is a 163-amino-acid chain: Cyclic pyranopterin monophosphate synthase (163 aa).

Substrate-binding positions include 75 to 77 and 113 to 114; these read MCH and ME. The active site involves Asp-128.

This sequence belongs to the MoaC family. In terms of assembly, homohexamer; trimer of dimers.

The enzyme catalyses (8S)-3',8-cyclo-7,8-dihydroguanosine 5'-triphosphate = cyclic pyranopterin phosphate + diphosphate. It participates in cofactor biosynthesis; molybdopterin biosynthesis. In terms of biological role, catalyzes the conversion of (8S)-3',8-cyclo-7,8-dihydroguanosine 5'-triphosphate to cyclic pyranopterin monophosphate (cPMP). This Desulforapulum autotrophicum (strain ATCC 43914 / DSM 3382 / VKM B-1955 / HRM2) (Desulfobacterium autotrophicum) protein is Cyclic pyranopterin monophosphate synthase.